Consider the following 572-residue polypeptide: Oxygen-dependent choline dehydrogenase (572 aa).

An FAD-binding site is contributed by 9–38 (DYVIIGGGSAGSVLGARLSEDKDKNVLVLE). The Proton acceptor role is filled by His-477.

It belongs to the GMC oxidoreductase family. The cofactor is FAD.

The enzyme catalyses choline + A = betaine aldehyde + AH2. It catalyses the reaction betaine aldehyde + NAD(+) + H2O = glycine betaine + NADH + 2 H(+). It functions in the pathway amine and polyamine biosynthesis; betaine biosynthesis via choline pathway; betaine aldehyde from choline (cytochrome c reductase route): step 1/1. Involved in the biosynthesis of the osmoprotectant glycine betaine. Catalyzes the oxidation of choline to betaine aldehyde and betaine aldehyde to glycine betaine at the same rate. This is Oxygen-dependent choline dehydrogenase from Staphylococcus epidermidis (strain ATCC 12228 / FDA PCI 1200).